The primary structure comprises 329 residues: Glycerol-3-phosphate dehydrogenase [NAD(P)+] (329 aa).

The NADPH site is built by Trp11, Arg30, and Lys103. Residues Lys103, Gly132, and Ser134 each coordinate sn-glycerol 3-phosphate. Ala136 lines the NADPH pocket. Residues Lys187, Asp240, Ser250, Arg251, and Asn252 each coordinate sn-glycerol 3-phosphate. The Proton acceptor role is filled by Lys187. Residue Arg251 coordinates NADPH. NADPH contacts are provided by Val275 and Glu277.

It belongs to the NAD-dependent glycerol-3-phosphate dehydrogenase family.

The protein localises to the cytoplasm. The catalysed reaction is sn-glycerol 3-phosphate + NAD(+) = dihydroxyacetone phosphate + NADH + H(+). It carries out the reaction sn-glycerol 3-phosphate + NADP(+) = dihydroxyacetone phosphate + NADPH + H(+). The protein operates within membrane lipid metabolism; glycerophospholipid metabolism. Functionally, catalyzes the reduction of the glycolytic intermediate dihydroxyacetone phosphate (DHAP) to sn-glycerol 3-phosphate (G3P), the key precursor for phospholipid synthesis. In Nitrosomonas europaea (strain ATCC 19718 / CIP 103999 / KCTC 2705 / NBRC 14298), this protein is Glycerol-3-phosphate dehydrogenase [NAD(P)+].